Here is a 408-residue protein sequence, read N- to C-terminus: Interferon-activable protein 203 (408 aa).

One can recognise a Pyrin domain in the interval 1–87 (MAEYKNIVLL…AKKLKTEKAK (87 aa)). A disordered region spans residues 84–208 (EKAKVQEKKK…EGHHQGPKQV (125 aa)). The span at 92-102 (KKGKCKTAGKK) shows a compositional bias: basic residues. The span at 150-159 (AQLPETSGTN) shows a compositional bias: polar residues. Residues 190–388 (TVPKEPSREE…SVRHSYMQVI (199 aa)) form the HIN-200 domain.

Belongs to the HIN-200 family. As to expression, constitutively expressed in the thymus, bone marrow and spleen. Isoform 1 and isoform 3 are present in liver (at protein level).

Its subcellular location is the nucleus. This is Interferon-activable protein 203 (Ifi203) from Mus musculus (Mouse).